Reading from the N-terminus, the 299-residue chain is Probable 3-hydroxyisobutyrate dehydrogenase-like 2, mitochondrial (299 aa).

NAD(+) contacts are provided by residues 14–43 and S108; that span reads TRIG…TVYA. K182 is an active-site residue. K250 contacts NAD(+).

It belongs to the HIBADH-related family. 3-hydroxyisobutyrate dehydrogenase subfamily.

The protein localises to the mitochondrion. The enzyme catalyses 3-hydroxy-2-methylpropanoate + NAD(+) = 2-methyl-3-oxopropanoate + NADH + H(+). It functions in the pathway amino-acid degradation; L-valine degradation. In Arabidopsis thaliana (Mouse-ear cress), this protein is Probable 3-hydroxyisobutyrate dehydrogenase-like 2, mitochondrial.